Here is a 428-residue protein sequence, read N- to C-terminus: Elongation factor 1-alpha (428 aa).

The 221-residue stretch at 5-225 (KPVLNVAFIG…DKFQPPEKPT (221 aa)) folds into the tr-type G domain. Positions 14-21 (GHVDAGKS) are G1. 14–21 (GHVDAGKS) provides a ligand contact to GTP. Serine 21 serves as a coordination point for Mg(2+). The segment at 70–74 (GVTID) is G2. Residues 91–94 (DCPG) form a G3 region. Residues 91-95 (DCPGH) and 149-152 (NKMD) each bind GTP. Positions 149 to 152 (NKMD) are G4. The segment at 189–191 (ASL) is G5.

It belongs to the TRAFAC class translation factor GTPase superfamily. Classic translation factor GTPase family. EF-Tu/EF-1A subfamily.

The protein localises to the cytoplasm. It catalyses the reaction GTP + H2O = GDP + phosphate + H(+). Functionally, GTP hydrolase that promotes the GTP-dependent binding of aminoacyl-tRNA to the A-site of ribosomes during protein biosynthesis. This is Elongation factor 1-alpha from Methanocaldococcus jannaschii (strain ATCC 43067 / DSM 2661 / JAL-1 / JCM 10045 / NBRC 100440) (Methanococcus jannaschii).